Reading from the N-terminus, the 82-residue chain is RNA-binding protein Hfq (82 aa).

Residues 11–71 (DTFLNHVRKT…ISTIMPGAPI (61 aa)) enclose the Sm domain.

It belongs to the Hfq family. As to quaternary structure, homohexamer.

Its function is as follows. RNA chaperone that binds small regulatory RNA (sRNAs) and mRNAs to facilitate mRNA translational regulation in response to envelope stress, environmental stress and changes in metabolite concentrations. Also binds with high specificity to tRNAs. The sequence is that of RNA-binding protein Hfq from Rhodopseudomonas palustris (strain BisA53).